A 414-amino-acid polypeptide reads, in one-letter code: Glycogen synthase (414 aa).

It belongs to the glycosyltransferase group 1 family.

It catalyses the reaction [(1-&gt;4)-alpha-D-glucosyl](n) + UDP-alpha-D-glucose = [(1-&gt;4)-alpha-D-glucosyl](n+1) + UDP + H(+). It functions in the pathway glycan biosynthesis; glycogen biosynthesis. In terms of biological role, glucosyltransferase that uses UDP-glucose as the sugar donor to elongate alpha-(1-&gt;4)-glucans. Is involved in the biosynthesis of both 6-O-methylglucosyl lipopolysaccharides (MGLP) and glycogen. May also use ADP-glucose as substrate. The chain is Glycogen synthase from Mycobacterium tuberculosis (strain CDC 1551 / Oshkosh).